The following is a 316-amino-acid chain: Cobalamin biosynthesis protein CobD (316 aa).

5 helical membrane passes run Phe45–Val65, Pro78–Phe100, Asp151–Tyr171, Leu209–Leu229, and Ile291–Val311.

Belongs to the CobD/CbiB family.

The protein resides in the cell membrane. Its pathway is cofactor biosynthesis; adenosylcobalamin biosynthesis. In terms of biological role, converts cobyric acid to cobinamide by the addition of aminopropanol on the F carboxylic group. This chain is Cobalamin biosynthesis protein CobD, found in Streptococcus sanguinis (strain SK36).